Reading from the N-terminus, the 37-residue chain is Large ribosomal subunit protein bL36 (37 aa).

Belongs to the bacterial ribosomal protein bL36 family.

In Alkaliphilus metalliredigens (strain QYMF), this protein is Large ribosomal subunit protein bL36.